A 314-amino-acid polypeptide reads, in one-letter code: Ribosomal RNA small subunit methyltransferase H (314 aa).

Residues 36–38 (AGH), Asp-56, Phe-83, Asp-104, and Gln-111 contribute to the S-adenosyl-L-methionine site.

Belongs to the methyltransferase superfamily. RsmH family.

The protein resides in the cytoplasm. It carries out the reaction cytidine(1402) in 16S rRNA + S-adenosyl-L-methionine = N(4)-methylcytidine(1402) in 16S rRNA + S-adenosyl-L-homocysteine + H(+). Functionally, specifically methylates the N4 position of cytidine in position 1402 (C1402) of 16S rRNA. This Brevibacillus brevis (strain 47 / JCM 6285 / NBRC 100599) protein is Ribosomal RNA small subunit methyltransferase H.